A 141-amino-acid chain; its full sequence is Large ribosomal subunit protein uL16 (141 aa).

The protein belongs to the universal ribosomal protein uL16 family. In terms of assembly, part of the 50S ribosomal subunit.

In terms of biological role, binds 23S rRNA and is also seen to make contacts with the A and possibly P site tRNAs. This chain is Large ribosomal subunit protein uL16, found in Kosmotoga olearia (strain ATCC BAA-1733 / DSM 21960 / TBF 19.5.1).